The following is a 172-amino-acid chain: MIIYRDLISHDEMFSDIYKIREIAGGLCLEVEGKMVSRTEGNIDDSLIGGNASAEGPEGEGTESTVITGVDIVMNHHLQETSFTKEAYKKYIKDYMKSIKGKLEEQRPERVKPFMTGAAEQIKHILANFKNYQFYIGENMNPDGMVALLDYREDGVTPFMIFFKDGLEMEKC.

The TCTP domain occupies 1-172; sequence MIIYRDLISH…FKDGLEMEKC (172 aa). S46 bears the Phosphoserine; by PLK1 mark. S53 bears the Phosphoserine mark. The residue at position 64 (S64) is a Phosphoserine; by PLK1. Residues 70-172 are required for reduction of TSC22D1 protein stability; the sequence is VDIVMNHHLQ…FKDGLEMEKC (103 aa).

Belongs to the TCTP family. As to quaternary structure, homodimer. Interacts with STEAP3. Interacts with TSC22D1; interaction results in the destabilization of TSC22D1 protein.

It is found in the cytoplasm. Functionally, involved in calcium binding and microtubule stabilization. Acts as a negative regulator of TSC22D1-mediated apoptosis, via interaction with and destabilization of TSC22D1 protein. The polypeptide is Translationally-controlled tumor protein (TPT1) (Oryctolagus cuniculus (Rabbit)).